The following is a 157-amino-acid chain: Endoribonuclease YbeY (157 aa).

The Zn(2+) site is built by His114, His118, and His124.

This sequence belongs to the endoribonuclease YbeY family. The cofactor is Zn(2+).

The protein localises to the cytoplasm. Single strand-specific metallo-endoribonuclease involved in late-stage 70S ribosome quality control and in maturation of the 3' terminus of the 16S rRNA. The chain is Endoribonuclease YbeY from Salmonella typhimurium (strain LT2 / SGSC1412 / ATCC 700720).